Consider the following 379-residue polypeptide: tRNA-specific 2-thiouridylase MnmA (379 aa).

ATP contacts are provided by residues 6 to 13 (AMSGGVDS) and Leu32. Catalysis depends on Cys101, which acts as the Nucleophile. Residues Cys101 and Cys199 are joined by a disulfide bond. Residue Gly125 coordinates ATP. An interaction with tRNA region spans residues 148 to 150 (KDQ). Cys199 acts as the Cysteine persulfide intermediate in catalysis.

The protein belongs to the MnmA/TRMU family.

It is found in the cytoplasm. It catalyses the reaction S-sulfanyl-L-cysteinyl-[protein] + uridine(34) in tRNA + AH2 + ATP = 2-thiouridine(34) in tRNA + L-cysteinyl-[protein] + A + AMP + diphosphate + H(+). Its function is as follows. Catalyzes the 2-thiolation of uridine at the wobble position (U34) of tRNA, leading to the formation of s(2)U34. This is tRNA-specific 2-thiouridylase MnmA from Paenarthrobacter aurescens (strain TC1).